The following is a 252-amino-acid chain: 3-deoxy-manno-octulosonate cytidylyltransferase (252 aa).

This sequence belongs to the KdsB family.

Its subcellular location is the cytoplasm. It carries out the reaction 3-deoxy-alpha-D-manno-oct-2-ulosonate + CTP = CMP-3-deoxy-beta-D-manno-octulosonate + diphosphate. Its pathway is nucleotide-sugar biosynthesis; CMP-3-deoxy-D-manno-octulosonate biosynthesis; CMP-3-deoxy-D-manno-octulosonate from 3-deoxy-D-manno-octulosonate and CTP: step 1/1. It participates in bacterial outer membrane biogenesis; lipopolysaccharide biosynthesis. Activates KDO (a required 8-carbon sugar) for incorporation into bacterial lipopolysaccharide in Gram-negative bacteria. This is 3-deoxy-manno-octulosonate cytidylyltransferase from Solibacter usitatus (strain Ellin6076).